The following is a 920-amino-acid chain: Translation initiation factor IF-2 (920 aa).

The disordered stretch occupies residues 33 to 305 (KSASSTVEAP…RGRKSKRAKR (273 aa)). A compositionally biased stretch (low complexity) spans 53–86 (SKSAPAPAKSAGNGATAAPATSATPATAAAAAAP). Pro residues-rich tracts occupy residues 87 to 159 (APAP…PAPR), 179 to 193 (PRPQ…PGTP), and 201 to 212 (NMPPRPAGPRPG). Over residues 225 to 291 (PGGRGPGGGG…GAAGAFGRPG (67 aa)) the composition is skewed to gly residues. Over residues 295–304 (KRGRKSKRAK) the composition is skewed to basic residues. In terms of domain architecture, tr-type G spans 416 to 588 (IRPPVVTVMG…VLLTADASLD (173 aa)). The tract at residues 425–432 (GHVDHGKT) is G1. 425-432 (GHVDHGKT) provides a ligand contact to GTP. Residues 450–454 (GITQH) form a G2 region. A G3 region spans residues 475 to 478 (DTPG). GTP contacts are provided by residues 475–479 (DTPGH) and 529–532 (NKID). A G4 region spans residues 529–532 (NKID). A G5 region spans residues 565 to 567 (SAK).

It belongs to the TRAFAC class translation factor GTPase superfamily. Classic translation factor GTPase family. IF-2 subfamily.

Its subcellular location is the cytoplasm. One of the essential components for the initiation of protein synthesis. Protects formylmethionyl-tRNA from spontaneous hydrolysis and promotes its binding to the 30S ribosomal subunits. Also involved in the hydrolysis of GTP during the formation of the 70S ribosomal complex. The chain is Translation initiation factor IF-2 from Mycobacterium sp. (strain JLS).